The chain runs to 544 residues: CTP synthase (544 aa).

The segment at Met-1–Leu-265 is amidoligase domain. Ser-13 is a binding site for CTP. Residue Ser-13 participates in UTP binding. ATP is bound at residue Ser-14–Leu-19. An L-glutamine-binding site is contributed by Tyr-54. Asp-71 contributes to the ATP binding site. Positions 71 and 139 each coordinate Mg(2+). CTP is bound by residues Asp-146–Glu-148, Lys-186–Gln-191, and Lys-222. Residues Lys-186–Gln-191 and Lys-222 contribute to the UTP site. Residue Val-240 participates in ATP binding. One can recognise a Glutamine amidotransferase type-1 domain in the interval Thr-291 to Leu-543. Position 353 (Gly-353) interacts with L-glutamine. Cys-380 serves as the catalytic Nucleophile; for glutamine hydrolysis. Residues Phe-381–Gln-384, Glu-404, and Arg-472 each bind L-glutamine. Residues His-516 and Glu-518 contribute to the active site.

The protein belongs to the CTP synthase family. Homotetramer.

It catalyses the reaction UTP + L-glutamine + ATP + H2O = CTP + L-glutamate + ADP + phosphate + 2 H(+). It carries out the reaction L-glutamine + H2O = L-glutamate + NH4(+). The enzyme catalyses UTP + NH4(+) + ATP = CTP + ADP + phosphate + 2 H(+). It participates in pyrimidine metabolism; CTP biosynthesis via de novo pathway; CTP from UDP: step 2/2. Allosterically activated by GTP, when glutamine is the substrate; GTP has no effect on the reaction when ammonia is the substrate. The allosteric effector GTP functions by stabilizing the protein conformation that binds the tetrahedral intermediate(s) formed during glutamine hydrolysis. Inhibited by the product CTP, via allosteric rather than competitive inhibition. In terms of biological role, catalyzes the ATP-dependent amination of UTP to CTP with either L-glutamine or ammonia as the source of nitrogen. Regulates intracellular CTP levels through interactions with the four ribonucleotide triphosphates. The polypeptide is CTP synthase (Azospirillum brasilense).